Consider the following 180-residue polypeptide: MEYKTPFIAKKLGVSPKAVVRIAQQLNLTIEKNKYGHFIFTQDDLDQMLEYHRSQIEQSQNTHPTQKTSSNDVEELKTQVNTIVQNISSHDFEQLAAQLNTITRRLDRMEEQMQDKANDVVTYQLLQHRREMEEMLERIQKLEAGLKKEEPIYITPDTKPTYEREKKPKRRKMIFSIFGL.

Residues 5–25 (TPFIAKKLGVSPKAVVRIAQQ) constitute a DNA-binding region (H-T-H motif). Positions 90 to 150 (HDFEQLAAQL…KLEAGLKKEE (61 aa)) form a coiled coil.

Belongs to the RacA family.

It is found in the cytoplasm. In terms of biological role, required for the formation of axial filaments and for anchoring the origin regions at the cell poles in sporulating cells, thus ensuring proper chromosome segregation in the prespore. Binds in a dispersed manner throughout the chromosome but preferentially to sites clustered in the origin portion of the chromosome, causing condensation of the chromosome and its remodeling into an elongated, anchored structure. This is Chromosome-anchoring protein RacA from Bacillus anthracis (strain A0248).